Reading from the N-terminus, the 447-residue chain is tRNA-2-methylthio-N(6)-dimethylallyladenosine synthase (447 aa).

One can recognise an MTTase N-terminal domain in the interval 14–130; the sequence is KKVYIRTFGC…LPAMIANAGQ (117 aa). [4Fe-4S] cluster-binding residues include Cys23, Cys59, Cys93, Cys166, Cys170, and Cys173. In terms of domain architecture, Radical SAM core spans 152 to 382; it reads RSGTISAFIP…IALQGSISGE (231 aa). In terms of domain architecture, TRAM spans 385-447; sequence AAEVGAVVEV…TPATLIGTPA (63 aa).

The protein belongs to the methylthiotransferase family. MiaB subfamily. In terms of assembly, monomer. The cofactor is [4Fe-4S] cluster.

Its subcellular location is the cytoplasm. It carries out the reaction N(6)-dimethylallyladenosine(37) in tRNA + (sulfur carrier)-SH + AH2 + 2 S-adenosyl-L-methionine = 2-methylsulfanyl-N(6)-dimethylallyladenosine(37) in tRNA + (sulfur carrier)-H + 5'-deoxyadenosine + L-methionine + A + S-adenosyl-L-homocysteine + 2 H(+). Functionally, catalyzes the methylthiolation of N6-(dimethylallyl)adenosine (i(6)A), leading to the formation of 2-methylthio-N6-(dimethylallyl)adenosine (ms(2)i(6)A) at position 37 in tRNAs that read codons beginning with uridine. The protein is tRNA-2-methylthio-N(6)-dimethylallyladenosine synthase of Chlorobium phaeobacteroides (strain BS1).